Here is a 126-residue protein sequence, read N- to C-terminus: Small ribosomal subunit protein uS12 (126 aa).

Residues 1–26 (MPTINQLVRKGRASETTKSKSPALQD) are disordered. Asp-89 carries the post-translational modification 3-methylthioaspartic acid. A disordered region spans residues 103-126 (DTQGVKDRKQARSKYGAKRAKAGK). Over residues 113–126 (ARSKYGAKRAKAGK) the composition is skewed to basic residues.

Belongs to the universal ribosomal protein uS12 family. As to quaternary structure, part of the 30S ribosomal subunit. Contacts proteins S8 and S17. May interact with IF1 in the 30S initiation complex.

Functionally, with S4 and S5 plays an important role in translational accuracy. Interacts with and stabilizes bases of the 16S rRNA that are involved in tRNA selection in the A site and with the mRNA backbone. Located at the interface of the 30S and 50S subunits, it traverses the body of the 30S subunit contacting proteins on the other side and probably holding the rRNA structure together. The combined cluster of proteins S8, S12 and S17 appears to hold together the shoulder and platform of the 30S subunit. The sequence is that of Small ribosomal subunit protein uS12 from Paraburkholderia xenovorans (strain LB400).